Consider the following 401-residue polypeptide: Inactive leucine-rich repeat receptor-like protein kinase CORYNE (401 aa).

The signal sequence occupies residues 1-33; it reads MKQRRRRNGCSSSNTISLLLLFFLVFFSRTSTS. Residues 34 to 62 are Extracellular-facing; the sequence is TSCRRRTVKHLSTTSTSSTPLESRITSKV. The helical transmembrane segment at 63-83 threads the bilayer; that stretch reads IVISIVSGILTGLVSALVLAF. The Cytoplasmic portion of the chain corresponds to 84–401; the sequence is LVRSIVKFMK…VHMLTQLHSF (318 aa). Residues 118–401 enclose the Protein kinase domain; it reads SNGIQLLGSD…VHMLTQLHSF (284 aa). Residues 124 to 132 and K146 each bind ATP; that span reads LGSDLNGKY.

Belongs to the protein kinase superfamily. Ser/Thr protein kinase family. In terms of assembly, self-interacts. Parts of a tetrameric complex made of two CLV2/CRN heterodimers that can interact with CLV3 and CLE peptides. CLV2/CRN heterodimer interacts with CLV1 homodimers. Interacts with CLV1 and CLV2. CLV2/CRN heterodimer can interact with BAM3. As to expression, present in roots, stems, leaves, inflorescence, flowers and siliques. Mostly expressed in shoot tips and, to a lesser extent, in young organs and roots. Also expressed in the inner tissues of the proximal root meristem. Expressed in the vascular cylinder of root tips, mostly in phloem poles.

The protein resides in the cell membrane. It is found in the endoplasmic reticulum membrane. In terms of biological role, involved in the perception of CLV3 and CLV3-like (CLE) peptides, that act as extracellular signals regulating meristem maintenance. Modulates root, shoot and flower apical meristem maintenance and floral organ development regulation, probably via CLAVATA (CLV)-like pathways involving at least CLV3 and CLE19. In complex with CLV2, perceives secreted CLV3-like effector proteins from plant-parasitic cyst nematodes as ligand mimics of the plant CLE signaling pathway. This recognition is required for proper feeding structure (syncytium) development and ultimately successful nematode infection. CLE14 perception by CLV2/CRN complex triggers root meristem differentiation. Required for the sensing of the root CLE peptides (e.g. CLE8, CLE9/CLE10, CLE11, CLE13, CLE14, CLE16, CLE17, CLE18, CLE20, CLE21, CLE25, CLE26, CLE40, CLE41/CLE44 and CLE45), which also involves CLV2 and leads to root growth regulation, mostly in the phloem and protophloem. Promotes the accumulation of BAM3, especially at later stages of protophloem development. This chain is Inactive leucine-rich repeat receptor-like protein kinase CORYNE, found in Arabidopsis thaliana (Mouse-ear cress).